The following is a 671-amino-acid chain: DNA ligase (671 aa).

NAD(+) contacts are provided by residues 32–36, 81–82, and Glu-113; these read DAEYD and SL. Catalysis depends on Lys-115, which acts as the N6-AMP-lysine intermediate. NAD(+) contacts are provided by Arg-136, Glu-173, Lys-290, and Lys-314. Residues Cys-408, Cys-411, Cys-426, and Cys-432 each coordinate Zn(2+). The BRCT domain occupies 593-671; sequence EIDSPFAGKT…EAEMMRLLGE (79 aa).

This sequence belongs to the NAD-dependent DNA ligase family. LigA subfamily. Mg(2+) serves as cofactor. The cofactor is Mn(2+).

The catalysed reaction is NAD(+) + (deoxyribonucleotide)n-3'-hydroxyl + 5'-phospho-(deoxyribonucleotide)m = (deoxyribonucleotide)n+m + AMP + beta-nicotinamide D-nucleotide.. Functionally, DNA ligase that catalyzes the formation of phosphodiester linkages between 5'-phosphoryl and 3'-hydroxyl groups in double-stranded DNA using NAD as a coenzyme and as the energy source for the reaction. It is essential for DNA replication and repair of damaged DNA. The chain is DNA ligase from Klebsiella pneumoniae (strain 342).